An 856-amino-acid polypeptide reads, in one-letter code: Rod cGMP-specific 3',5'-cyclic phosphodiesterase subunit beta (856 aa).

S2 carries the post-translational modification N-acetylserine. GAF domains follow at residues N71 to L220 and D252 to V429. The PDEase domain maps to E481 to Y814. The Proton donor role is filled by H557. Residues H561, H597, D598, and D718 each contribute to the a divalent metal cation site. Residues E823–T833 show a composition bias toward basic and acidic residues. The disordered stretch occupies residues E823 to C842. A lipid anchor (S-geranylgeranyl cysteine) is attached at C853. Residues C854–L856 constitute a propeptide, removed in mature form.

The protein belongs to the cyclic nucleotide phosphodiesterase family. As to quaternary structure, oligomer composed of two catalytic chains (alpha and beta), an inhibitory chain (gamma) and the delta chain. It depends on a divalent metal cation as a cofactor.

The protein localises to the membrane. It localises to the cell projection. The protein resides in the cilium. It is found in the photoreceptor outer segment. It catalyses the reaction 3',5'-cyclic GMP + H2O = GMP + H(+). Its function is as follows. Rod-specific cGMP phosphodiesterase that catalyzes the hydrolysis of 3',5'-cyclic GMP. Necessary for the formation of a functional phosphodiesterase holoenzyme. Involved in retinal circadian rhythm photoentrainment via modulation of UVA and orange light-induced phase-shift of the retina clock. May participate in processes of transmission and amplification of the visual signal. The polypeptide is Rod cGMP-specific 3',5'-cyclic phosphodiesterase subunit beta (Canis lupus familiaris (Dog)).